Consider the following 459-residue polypeptide: Serine/threonine-protein kinase 12 (459 aa).

The tract at residues 1–30 (MEEDYQQPRFTIGRQSSMAPEKIPEPSVHS) is disordered. 3 ANK repeats span residues 42 to 71 (DGGV…DANY), 75 to 104 (DDRT…EVDP), and 108 to 137 (WGST…KHPM). The Protein kinase domain occupies 102–417 (VDPKDRWGST…EIIKRLESIL (316 aa)). Residues 108 to 116 (WGSTPFADA) and Lys184 each bind ATP. Asp281 (proton acceptor) is an active-site residue.

It belongs to the protein kinase superfamily. Ser/Thr protein kinase family. As to quaternary structure, interacts with BLUS1, PHOT1 and PHOT2. In terms of tissue distribution, accumulates in leaves, stems, petioles and roots, especially in guard cells.

Its subcellular location is the cytoplasm. The protein localises to the cytosol. It catalyses the reaction L-seryl-[protein] + ATP = O-phospho-L-seryl-[protein] + ADP + H(+). The catalysed reaction is L-threonyl-[protein] + ATP = O-phospho-L-threonyl-[protein] + ADP + H(+). Serine/threonine protein kinase that phosphorylates proteins on serine and threonine residues. Mediates blue light-dependent stomatal opening in guard cells by promoting plasma membrane-type ATPases (AHA1 and AHA2) phosphorylation. The polypeptide is Serine/threonine-protein kinase 12 (Arabidopsis thaliana (Mouse-ear cress)).